Reading from the N-terminus, the 245-residue chain is 14-3-3 protein theta (245 aa).

Position 1 is an N-acetylmethionine (Met1). The residue at position 3 (Lys3) is an N6-acetyllysine. Lys49 is modified (N6-acetyllysine; alternate). Residue Lys49 forms a Glycyl lysine isopeptide (Lys-Gly) (interchain with G-Cter in SUMO2); alternate linkage. Lys68 bears the N6-acetyllysine mark. Tyr82 bears the 3'-nitrotyrosine mark. Ser92 carries the post-translational modification Phosphoserine. At Tyr104 the chain carries 3'-nitrotyrosine. Lys115 bears the N6-acetyllysine mark. The residue at position 232 (Ser232) is a Phosphoserine; by CK1.

The protein belongs to the 14-3-3 family. In terms of assembly, homodimer. Interacts with CDK16. Interacts with RGS7 (phosphorylated form). Interacts with SSH1. Interacts with CDKN1B ('Thr-198' phosphorylated form); the interaction translocates CDKN1B to the cytoplasm. Interacts with GAB2. Interacts with the 'Ser-241' phosphorylated form of PDPK1. Interacts with the 'Thr-369' phosphorylated form of DAPK2. Interacts with PI4KB, TBC1D22A and TBC1D22B. Interacts with SLITRK1. Interacts with RIPOR2. Interacts with INAVA; the interaction increases upon PRR (pattern recognition receptor) stimulation and is required for cellular signaling pathway activation and cytokine secretion. Interacts with MARK2, MARK3 and MARK4. Interacts with MEFV.

Its subcellular location is the cytoplasm. Adapter protein implicated in the regulation of a large spectrum of both general and specialized signaling pathways. Binds to a large number of partners, usually by recognition of a phosphoserine or phosphothreonine motif. Binding generally results in the modulation of the activity of the binding partner. Negatively regulates the kinase activity of PDPK1. The sequence is that of 14-3-3 protein theta (YWHAQ) from Bos taurus (Bovine).